The primary structure comprises 428 residues: Involucrin (428 aa).

Disordered regions lie at residues 1–128 (MSQQ…EEKK) and 140–398 (KRDD…GQAQ). Residues 56–76 (PSKHEEKHVTIVKGVPEHECE) show a composition bias toward basic and acidic residues. Positions 77–92 (QQQQAQGQERQQQHWG) are enriched in low complexity. Composition is skewed to basic and acidic residues over residues 107 to 117 (LKQEEAQREKQ), 162 to 174 (QLKH…KPLE), and 192 to 208 (QLKH…HLEQ). Residues 209–218 (QEGQLELPEQ) show a composition bias toward low complexity. A compositionally biased stretch (basic and acidic residues) spans 220 to 297 (DQPKHLEQLE…CEGQLEHLEQ (78 aa)). The segment covering 298 to 311 (QEGQLELPEQQVGQ) has biased composition (low complexity). Basic and acidic residues-rich tracts occupy residues 313-327 (KHLE…HPEQ), 352-366 (KHLE…HPEQ), and 374-385 (QLKDLEQQERQL).

The protein belongs to the involucrin family. As to quaternary structure, directly or indirectly cross-linked to cornifelin (CNFN). Substrate of transglutaminase. Specific glutamines or lysines are cross-linked to keratins, desmoplakin and to inter involucrin molecules. As to expression, keratinocytes of epidermis and other stratified squamous epithelia.

Its subcellular location is the cytoplasm. Part of the insoluble cornified cell envelope (CE) of stratified squamous epithelia. This is Involucrin (IVL) from Cebus albifrons (White-fronted capuchin).